A 227-amino-acid chain; its full sequence is Ashwin (227 aa).

Basic and acidic residues predominate over residues 71 to 84; it reads LPRSRWGKRMEKSR. The tract at residues 71–227 is disordered; that stretch reads LPRSRWGKRM…KKKIQHITWP (157 aa). Low complexity predominate over residues 88 to 98; that stretch reads SSSSTHSSSTD. Residues 153-173 show a composition bias toward polar residues; the sequence is GASTNCSSSNFSNRTPVSSSG. Low complexity predominate over residues 178–191; it reads SPSNHSNSSVHSNN. A compositionally biased stretch (basic and acidic residues) spans 204–219; the sequence is GEPDTAKDIKSPETKK.

The protein belongs to the ashwin family.

Its subcellular location is the nucleus. The protein is Ashwin of Danio rerio (Zebrafish).